Consider the following 410-residue polypeptide: Histone-lysine N-methyltransferase SUV39H2 (410 aa).

The Chromo domain occupies 47-105 (YEVEYLCDYKVVKDMEYYLVKWKGWPDSTNTWEPLQNLKCPLLLQQFSNDKHNYLSQVK). The Pre-SET domain occupies 189 to 247 (FGCSCTDCFFQKCCPAEAGVLLAYNKNQQIKIPPGTPIYECNSRCQCGPDCPNRIVQKG). Cysteine 191, cysteine 193, cysteine 196, cysteine 201, cysteine 202, cysteine 229, cysteine 233, cysteine 235, and cysteine 239 together coordinate Zn(2+). One can recognise an SET domain in the interval 250 to 373 (YSLCIFRTSN…AGEELTFDYQ (124 aa)). S-adenosyl-L-methionine contacts are provided by residues 261–263 (RGW) and 330–331 (NH). Residue cysteine 333 coordinates Zn(2+). Residue tyrosine 372 participates in S-adenosyl-L-methionine binding. Phosphoserine is present on residues serine 381, serine 384, and serine 388. In terms of domain architecture, Post-SET spans 394-410 (VRTVCKCGAVTCRGYLN). Residue cysteine 398 participates in Zn(2+) binding. Lysine 399 is a binding site for S-adenosyl-L-methionine. Zn(2+) is bound by residues cysteine 400 and cysteine 405.

Belongs to the class V-like SAM-binding methyltransferase superfamily. Histone-lysine methyltransferase family. Suvar3-9 subfamily. In terms of assembly, interacts with SMAD5. The large PER complex involved in the histone methylation is composed of at least PER2, CBX3, TRIM28, SUV39H1 and/or SUV39H2; CBX3 mediates the formation of the complex. In terms of processing, ubiquitinated by the DCX(DCAF13) E3 ubiquitin ligase complex, leading to its degradation.

It localises to the nucleus. The protein localises to the chromosome. It is found in the centromere. It catalyses the reaction L-lysyl(9)-[histone H3] + 3 S-adenosyl-L-methionine = N(6),N(6),N(6)-trimethyl-L-lysyl(9)-[histone H3] + 3 S-adenosyl-L-homocysteine + 3 H(+). Histone methyltransferase that specifically trimethylates 'Lys-9' of histone H3 using monomethylated H3 'Lys-9' as substrate. H3 'Lys-9' trimethylation represents a specific tag for epigenetic transcriptional repression by recruiting HP1 (CBX1, CBX3 and/or CBX5) proteins to methylated histones. Mainly functions in heterochromatin regions, thereby playing a central role in the establishment of constitutive heterochromatin at pericentric and telomere regions. H3 'Lys-9' trimethylation is also required to direct DNA methylation at pericentric repeats. SUV39H1 is targeted to histone H3 via its interaction with RB1 and is involved in many processes, such as cell cycle regulation, transcriptional repression and regulation of telomere length. May participate in regulation of higher-order chromatin organization during spermatogenesis. Recruited by the large PER complex to the E-box elements of the circadian target genes such as PER2 itself or PER1, contributes to the conversion of local chromatin to a heterochromatin-like repressive state through H3 'Lys-9' trimethylation. The chain is Histone-lysine N-methyltransferase SUV39H2 (SUV39H2) from Homo sapiens (Human).